Reading from the N-terminus, the 343-residue chain is GTPase Obg (343 aa).

One can recognise an Obg domain in the interval 1–159; it reads MQFIDHATIC…RQLRLELKLL (159 aa). An OBG-type G domain is found at 160-328; the sequence is AEVGLIGLPN…LLRLVWQWLD (169 aa). Residues 166-173, 191-195, 213-216, 280-283, and 309-311 contribute to the GTP site; these read GLPNAGKS, FTTLV, DIPG, NKID, and SSA. Mg(2+)-binding residues include S173 and T193.

This sequence belongs to the TRAFAC class OBG-HflX-like GTPase superfamily. OBG GTPase family. As to quaternary structure, monomer. Requires Mg(2+) as cofactor.

It is found in the cytoplasm. An essential GTPase which binds GTP, GDP and possibly (p)ppGpp with moderate affinity, with high nucleotide exchange rates and a fairly low GTP hydrolysis rate. Plays a role in control of the cell cycle, stress response, ribosome biogenesis and in those bacteria that undergo differentiation, in morphogenesis control. The sequence is that of GTPase Obg from Synechococcus elongatus (strain ATCC 33912 / PCC 7942 / FACHB-805) (Anacystis nidulans R2).